Consider the following 237-residue polypeptide: Uridylate kinase (237 aa).

11–14 (KLSG) is an ATP binding site. Position 53 (Gly53) interacts with UMP. 2 residues coordinate ATP: Gly54 and Arg58. Residues Asp73 and 134–141 (TGNPFFTT) contribute to the UMP site. Positions 161, 167, and 170 each coordinate ATP.

This sequence belongs to the UMP kinase family. In terms of assembly, homohexamer.

Its subcellular location is the cytoplasm. It carries out the reaction UMP + ATP = UDP + ADP. It functions in the pathway pyrimidine metabolism; CTP biosynthesis via de novo pathway; UDP from UMP (UMPK route): step 1/1. Inhibited by UTP. In terms of biological role, catalyzes the reversible phosphorylation of UMP to UDP. This Nitrosomonas eutropha (strain DSM 101675 / C91 / Nm57) protein is Uridylate kinase.